The chain runs to 102 residues: Large ribosomal subunit protein bL21 (102 aa).

The protein belongs to the bacterial ribosomal protein bL21 family. As to quaternary structure, part of the 50S ribosomal subunit. Contacts protein L20.

Its function is as follows. This protein binds to 23S rRNA in the presence of protein L20. In Levilactobacillus brevis (strain ATCC 367 / BCRC 12310 / CIP 105137 / JCM 1170 / LMG 11437 / NCIMB 947 / NCTC 947) (Lactobacillus brevis), this protein is Large ribosomal subunit protein bL21.